The chain runs to 117 residues: Large ribosomal subunit protein uL22 (117 aa).

Belongs to the universal ribosomal protein uL22 family. Part of the 50S ribosomal subunit.

This protein binds specifically to 23S rRNA; its binding is stimulated by other ribosomal proteins, e.g. L4, L17, and L20. It is important during the early stages of 50S assembly. It makes multiple contacts with different domains of the 23S rRNA in the assembled 50S subunit and ribosome. Functionally, the globular domain of the protein is located near the polypeptide exit tunnel on the outside of the subunit, while an extended beta-hairpin is found that lines the wall of the exit tunnel in the center of the 70S ribosome. In Lactobacillus helveticus (strain DPC 4571), this protein is Large ribosomal subunit protein uL22.